The primary structure comprises 207 residues: Ras-related protein Rab-7a (207 aa).

T2 bears the N-acetylthreonine mark. Residues S17, G18, V19, G20, K21, T22, S23, S34, N35, Y37, and T40 each contribute to the GTP site. Residue T22 participates in Mg(2+) binding. Positions 28–41 (YVNKKFSNQYKATI) match the Switch 1 motif. Positions 40 and 63 each coordinate Mg(2+). G66 is a GTP binding site. The Switch 2 motif lies at 67–82 (QERFQSLSVAFYRGAD). S72 carries the post-translational modification Phosphoserine. Residues N125, K126, D128, A156, and K157 each coordinate GTP. Glycyl lysine isopeptide (Lys-Gly) (interchain with G-Cter in ubiquitin) cross-links involve residues K191 and K194. S-geranylgeranyl cysteine attachment occurs at residues C205 and C207. At C207 the chain carries Cysteine methyl ester.

Belongs to the small GTPase superfamily. Rab family. In terms of assembly, interacts with NTRK1/TRKA. Interacts with RILP. Interacts with PSMA7. Interacts with RNF115. Interacts with FYCO1. Interacts with the PIK3C3/VPS34-PIK3R4 complex. The GTP-bound form interacts with OSBPL1A. The GTP-bound form interacts with RAC1. Interacts with CLN3. Interacts with CHM, the substrate-binding subunit of the Rab geranylgeranyltransferase complex. Interacts with C9orf72. Does not interact with HPS4 and the BLOC-3 complex (heterodimer of HPS1 and HPS4). Interacts with CLN5. Interacts with PLEKHM1 (via N- and C-terminus). Interacts with PRPH; the interaction is direct. Interacts with VPS13A. The GDP-bound form interacts with RIMOC1. Interacts with the MON1A-CCZ1B complex and this interaction is enhanced in the presence of RIMOC1. Interacts with VPS39 and VPS41. Forms a ternary complex with LAMP2 and RUFY4; the interaction with LAMP2 is mediated by RUFY4 (via RUN and coiled coil domains). Requires Mg(2+) as cofactor. Post-translationally, deubiquitination at Lys-191 and Lys-194 by USP32. Phosphorylated at Ser-72 by LRRK1; phosphorylation is dependent on protein kinase C (PKC) activation of LRRK1. In terms of processing, prenylated. Prenylation is required for association with cellular membranes.

It localises to the cytoplasmic vesicle. The protein localises to the phagosome membrane. The protein resides in the late endosome membrane. It is found in the lysosome membrane. Its subcellular location is the melanosome membrane. It localises to the autophagosome membrane. The protein localises to the lipid droplet. The protein resides in the endosome membrane. It is found in the mitochondrion membrane. The catalysed reaction is GTP + H2O = GDP + phosphate + H(+). Its activity is regulated as follows. Regulated by guanine nucleotide exchange factors (GEFs) which promote the exchange of bound GDP for free GTP. Regulated by GTPase activating proteins (GAPs) which increase the GTP hydrolysis activity. Inhibited by GDP dissociation inhibitors (GDIs). In terms of biological role, the small GTPases Rab are key regulators of intracellular membrane trafficking, from the formation of transport vesicles to their fusion with membranes. Rabs cycle between an inactive GDP-bound form and an active GTP-bound form that is able to recruit to membranes different sets of downstream effectors directly responsible for vesicle formation, movement, tethering and fusion. In its active state, RAB7A binds to a variety of effector proteins playing a key role in the regulation of endo-lysosomal trafficking. Governs early-to-late endosomal maturation, microtubule minus-end as well as plus-end directed endosomal migration and positioning, and endosome-lysosome transport through different protein-protein interaction cascades. Also plays a central role in growth-factor-mediated cell signaling, nutrient-transporter-mediated nutrient uptake, neurotrophin transport in the axons of neurons and lipid metabolism. Also involved in regulation of some specialized endosomal membrane trafficking, such as maturation of melanosomes, pathogen-induced phagosomes (or vacuoles) and autophagosomes. Plays a role in the maturation and acidification of phagosomes that engulf pathogens, such as S.aureus and Mycobacteria. Plays a role in the fusion of phagosomes with lysosomes. In concert with RAC1, plays a role in regulating the formation of RBs (ruffled borders) in osteoclasts. Controls the endosomal trafficking and neurite outgrowth signaling of NTRK1/TRKA. Regulates the endocytic trafficking of the EGF-EGFR complex by regulating its lysosomal degradation. Involved in the ADRB2-stimulated lipolysis through lipophagy, a cytosolic lipase-independent autophagic pathway. Required for the exosomal release of SDCBP, CD63 and syndecan. Required for vesicular trafficking and cell surface expression of ACE2. May play a role in PRPH neuronal intermediate filament assembly. The protein is Ras-related protein Rab-7a (RAB7A) of Oryctolagus cuniculus (Rabbit).